Reading from the N-terminus, the 222-residue chain is Lipid A 4'-phosphatase (222 aa).

Residues 1-3 are Cytoplasmic-facing; it reads MAR. Residues 4 to 24 form a helical membrane-spanning segment; the sequence is FHIILGLVVCFFAWIFFLIFP. Over 25–58 the chain is Periplasmic; the sequence is NLDIQFAGHFYNSSAHQFIGGYDGFLGFLHWFAR. A helical transmembrane segment spans residues 59–79; that stretch reads FFPIFFSIIVILFLLGSLFID. Over 80–87 the chain is Cytoplasmic; sequence KFKIKYRK. A helical transmembrane segment spans residues 88 to 108; sequence AIFFIAVCLWIGPGLVVNYVF. Over 109-144 the chain is Periplasmic; that stretch reads KDHWGRPRPVMVEQFNGDKIFQPPFVISSQCDKNCS. The chain crosses the membrane as a helical span at residues 145–165; sequence FVCGDASMGFWLFAFMPLLAT. The Cytoplasmic segment spans residues 166–169; sequence RKKK. A helical membrane pass occupies residues 170–190; that stretch reads LVAFIAAVVAGGGLGLMRMSQ. Over 191 to 193 the chain is Periplasmic; sequence GGH. A helical membrane pass occupies residues 194–214; that stretch reads FFSDVVFCGIFVYISTWVVYA. Over 215-222 the chain is Cytoplasmic; sequence LMYRKKEY.

This sequence belongs to the lipid A LpxF 4'-phosphatase family.

It localises to the cell inner membrane. The protein operates within bacterial outer membrane biogenesis; LPS lipid A biosynthesis. Its function is as follows. Removes the 4'-phosphate moiety from lipid IV(A) (a tetraacylated precursor of lipid A) and from pentaacylated lipid A, but not from hexaacylated lipid A (as is found in E.coli). Does not dephosphorylate phosphatidic acid, phosphatidylglycerophosphate, or the 1-phosphate group of lipid A and lipid A precursors. Its expression in E.coli confers resistance to the cationic antimicrobial peptide (CAMP) polymyxin B. Plays a critical role in the ability of the bacteria to avoid the host's innate immune system, especially the bactericidal action of CAMPs, although whether it is CAMP-sensitivity or increased sensitivity to the immune system is not clear. The sequence is that of Lipid A 4'-phosphatase from Francisella tularensis subsp. novicida (strain U112).